The following is a 440-amino-acid chain: UDP-N-acetylmuramoylalanine--D-glutamate ligase (440 aa).

115–121 (GSNGKST) is an ATP binding site.

Belongs to the MurCDEF family.

It is found in the cytoplasm. It catalyses the reaction UDP-N-acetyl-alpha-D-muramoyl-L-alanine + D-glutamate + ATP = UDP-N-acetyl-alpha-D-muramoyl-L-alanyl-D-glutamate + ADP + phosphate + H(+). The protein operates within cell wall biogenesis; peptidoglycan biosynthesis. Its function is as follows. Cell wall formation. Catalyzes the addition of glutamate to the nucleotide precursor UDP-N-acetylmuramoyl-L-alanine (UMA). This is UDP-N-acetylmuramoylalanine--D-glutamate ligase from Aliivibrio fischeri (strain ATCC 700601 / ES114) (Vibrio fischeri).